The following is a 130-amino-acid chain: Glycine cleavage system H protein (130 aa).

The Lipoyl-binding domain maps to 24-106 (TLTIGITDHA…YGEGWIMRIR (83 aa)). The residue at position 65 (Lys65) is an N6-lipoyllysine. Residues 111–130 (DDLEQLLDPEDYQDLVADEE) are disordered.

This sequence belongs to the GcvH family. As to quaternary structure, the glycine cleavage system is composed of four proteins: P, T, L and H. (R)-lipoate is required as a cofactor.

Functionally, the glycine cleavage system catalyzes the degradation of glycine. The H protein shuttles the methylamine group of glycine from the P protein to the T protein. This Alkalilimnicola ehrlichii (strain ATCC BAA-1101 / DSM 17681 / MLHE-1) protein is Glycine cleavage system H protein.